The following is a 490-amino-acid chain: MTERVDPKKLIKGGLHDWEVVIGMEIHAQVTSRSKLFSGASTAFGGEPNDHVSLVDAAMPGMLPVINEECIAQAVRTGLGLKAQINLRSVFDRKNYFYPDLPQGYQISQYKDPIVGEGEVLVDLPDGESITVGIERLHLEQDAGKSLHDQDPTKSFVDLNRSGVALMEIVSRPDLRSSEEAKAYVTKLRTILRYLGTCDGDMEKGSLRADVNVSVRRPGEPLGTRCEIKNVNSIRFIGQAIETEARRQIAILEDGGKIDQETRLFDPGKGETRSMRSKEEAHDYRYFPDPDLLPLEFDQAYVDGLASGLPELPDAKKARFIKDFGLSAYDAGVLVAERASADYFEAVARGRDGKAAANWVINELFGRLNKEGRSIEDTPVSAEQLGTIVDLIGEGVISGKIAKDLFEIVWSEGGDPRAIVESRGMKQVTDTGAIEAAVDAIIAANPDKVEQAKAKPTLLGWFVGQTMKATGGKANPAAVNALLKDKLGIE.

Belongs to the GatB/GatE family. GatB subfamily. In terms of assembly, heterotrimer of A, B and C subunits.

It carries out the reaction L-glutamyl-tRNA(Gln) + L-glutamine + ATP + H2O = L-glutaminyl-tRNA(Gln) + L-glutamate + ADP + phosphate + H(+). The catalysed reaction is L-aspartyl-tRNA(Asn) + L-glutamine + ATP + H2O = L-asparaginyl-tRNA(Asn) + L-glutamate + ADP + phosphate + 2 H(+). Allows the formation of correctly charged Asn-tRNA(Asn) or Gln-tRNA(Gln) through the transamidation of misacylated Asp-tRNA(Asn) or Glu-tRNA(Gln) in organisms which lack either or both of asparaginyl-tRNA or glutaminyl-tRNA synthetases. The reaction takes place in the presence of glutamine and ATP through an activated phospho-Asp-tRNA(Asn) or phospho-Glu-tRNA(Gln). The chain is Aspartyl/glutamyl-tRNA(Asn/Gln) amidotransferase subunit B from Methylorubrum populi (strain ATCC BAA-705 / NCIMB 13946 / BJ001) (Methylobacterium populi).